A 1412-amino-acid polypeptide reads, in one-letter code: DNA-directed RNA polymerase subunit beta' (1412 aa).

Positions 70, 72, 85, and 88 each coordinate Zn(2+). Positions 460, 462, and 464 each coordinate Mg(2+). The Zn(2+) site is built by cysteine 819, cysteine 893, cysteine 900, and cysteine 903. The tract at residues 1392–1412 (EEAFEFGTPSTPAEEPQHPAE) is disordered.

Belongs to the RNA polymerase beta' chain family. As to quaternary structure, the RNAP catalytic core consists of 2 alpha, 1 beta, 1 beta' and 1 omega subunit. When a sigma factor is associated with the core the holoenzyme is formed, which can initiate transcription. Requires Mg(2+) as cofactor. The cofactor is Zn(2+).

It carries out the reaction RNA(n) + a ribonucleoside 5'-triphosphate = RNA(n+1) + diphosphate. Functionally, DNA-dependent RNA polymerase catalyzes the transcription of DNA into RNA using the four ribonucleoside triphosphates as substrates. In Burkholderia thailandensis (strain ATCC 700388 / DSM 13276 / CCUG 48851 / CIP 106301 / E264), this protein is DNA-directed RNA polymerase subunit beta'.